The sequence spans 179 residues: Diphosphoinositol polyphosphate phosphohydrolase 2 (179 aa).

Substrate-binding positions include Arg-9, 17–19, and 38–40; these read KKR and SSR. The Nudix hydrolase domain maps to 17-143; that stretch reads KKRAACLCFR…VHAEYLEKLK (127 aa). Residues Gly-49 and Glu-65 each contribute to the Mg(2+) site. Residues 50-71 carry the Nudix box motif; the sequence is GGMEPEEEPGGAAVREVYEEAG. The active-site Proton acceptor is the Glu-68. Glu-69 serves as a coordination point for Mg(2+). Residues 88–90, Arg-114, and Lys-132 contribute to the substrate site; that span reads RKH.

This sequence belongs to the Nudix hydrolase family. DIPP subfamily. Requires Mg(2+) as cofactor. Mn(2+) serves as cofactor.

The protein localises to the cytoplasm. It catalyses the reaction diphospho-myo-inositol polyphosphate + H2O = myo-inositol polyphosphate + phosphate.. The catalysed reaction is 5-diphospho-1D-myo-inositol 1,2,3,4,6-pentakisphosphate + H2O = 1D-myo-inositol hexakisphosphate + phosphate + H(+). The enzyme catalyses 3,5-bis(diphospho)-1D-myo-inositol 1,2,4,6-tetrakisphosphate + H2O = 3-diphospho-1D-myo-inositol 1,2,4,5,6-pentakisphosphate + phosphate + 2 H(+). It carries out the reaction 5-diphospho-1D-myo-inositol 1,3,4,6-tetrakisphosphate + H2O = 1D-myo-inositol 1,3,4,5,6-pentakisphosphate + phosphate + H(+). It catalyses the reaction P(1),P(6)-bis(5'-adenosyl) hexaphosphate + H2O = 2 ATP + 2 H(+). The catalysed reaction is P(1),P(5)-bis(5'-adenosyl) pentaphosphate + H2O = ADP + ATP + 2 H(+). The enzyme catalyses 5-phospho-alpha-D-ribose 1-diphosphate + H2O = alpha-D-ribose 1,5-bisphosphate + phosphate + H(+). In terms of biological role, cleaves the beta-phosphate from diphosphoinositol polyphosphates such as PP-InsP5 (diphosphoinositol pentakisphosphate), PP-InsP4 (diphosphoinositol tetrakisphosphate) and [PP]2-InsP4 (bisdiphosphoinositol tetrakisphosphate), suggesting that it may play a role in signal transduction. Diadenosine polyphosphates, particularly Ap6A (P(1),P(6)-bis(5a-adenosyl) hexaphosphate) and Ap5A (P(1),P(5)-bis(5'-adenosyl) pentaphosphate) are downstream effectors of a signaling cascade that regulates cardiac KATP channels, can also be substrates, although with lower preference than the diphosphoinositol polyphosphates. Can also catalyze the hydrolysis of 5-phosphoribose 1-diphosphate, generating the glycolytic activator ribose 1,5-bisphosphate. Does not play a role in U8 snoRNA decapping activity. Binds U8 snoRNA. The protein is Diphosphoinositol polyphosphate phosphohydrolase 2 of Mus musculus (Mouse).